A 116-amino-acid polypeptide reads, in one-letter code: Large ribosomal subunit protein uL18 (116 aa).

It belongs to the universal ribosomal protein uL18 family. In terms of assembly, part of the 50S ribosomal subunit; part of the 5S rRNA/L5/L18/L25 subcomplex. Contacts the 5S and 23S rRNAs.

This is one of the proteins that bind and probably mediate the attachment of the 5S RNA into the large ribosomal subunit, where it forms part of the central protuberance. The sequence is that of Large ribosomal subunit protein uL18 from Mycoplasma mycoides subsp. mycoides SC (strain CCUG 32753 / NCTC 10114 / PG1).